The primary structure comprises 81 residues: Photosystem I iron-sulfur center (81 aa).

4Fe-4S ferredoxin-type domains lie at 2–31 (SHTV…MVPW) and 39–68 (VASS…IRVY). C11, C14, C17, C21, C48, C51, C54, and C58 together coordinate [4Fe-4S] cluster.

As to quaternary structure, the cyanobacterial PSI reaction center is composed of one copy each of PsaA,B,C,D,E,F,I,J,K,L,M and X, and forms trimeric complexes. It depends on [4Fe-4S] cluster as a cofactor.

It is found in the cellular thylakoid membrane. It carries out the reaction reduced [plastocyanin] + hnu + oxidized [2Fe-2S]-[ferredoxin] = oxidized [plastocyanin] + reduced [2Fe-2S]-[ferredoxin]. Functionally, apoprotein for the two 4Fe-4S centers FA and FB of photosystem I (PSI); essential for photochemical activity. FB is the terminal electron acceptor of PSI, donating electrons to ferredoxin. The C-terminus interacts with PsaA/B/D and helps assemble the protein into the PSI complex. Required for binding of PsaD and PsaE to PSI. PSI is a plastocyanin/cytochrome c6-ferredoxin oxidoreductase, converting photonic excitation into a charge separation, which transfers an electron from the donor P700 chlorophyll pair to the spectroscopically characterized acceptors A0, A1, FX, FA and FB in turn. The polypeptide is Photosystem I iron-sulfur center (Trichormus variabilis (strain ATCC 29413 / PCC 7937) (Anabaena variabilis)).